Reading from the N-terminus, the 572-residue chain is Urease subunit alpha (572 aa).

Residues 134 to 572 (AGIDSHIHLI…AAMNQRYFFG (439 aa)) enclose the Urease domain. Ni(2+) is bound by residues His-139, His-141, and Lys-222. N6-carboxylysine is present on Lys-222. Residue His-224 coordinates substrate. Positions 251 and 277 each coordinate Ni(2+). Residue His-325 is the Proton donor of the active site. Asp-365 lines the Ni(2+) pocket.

Belongs to the metallo-dependent hydrolases superfamily. Urease alpha subunit family. Heterotrimer of UreA (gamma), UreB (beta) and UreC (alpha) subunits. Three heterotrimers associate to form the active enzyme. Requires Ni cation as cofactor. In terms of processing, carboxylation allows a single lysine to coordinate two nickel ions.

It is found in the cytoplasm. The enzyme catalyses urea + 2 H2O + H(+) = hydrogencarbonate + 2 NH4(+). Its pathway is nitrogen metabolism; urea degradation; CO(2) and NH(3) from urea (urease route): step 1/1. The sequence is that of Urease subunit alpha from Yersinia enterocolitica serotype O:8 / biotype 1B (strain NCTC 13174 / 8081).